A 639-amino-acid chain; its full sequence is Tetracycline resistance protein TetM from transposon Tn5251 (639 aa).

Residues 1 to 242 (MKIINIGVLA…VITNKFYSST (242 aa)) enclose the tr-type G domain. Residues 10 to 17 (AHVDAGKT), 74 to 78 (DTPGH), and 128 to 131 (NKID) contribute to the GTP site.

The protein belongs to the TRAFAC class translation factor GTPase superfamily. Classic translation factor GTPase family. TetM/TetO subfamily.

Its function is as follows. Abolishes the inhibitory effect of tetracyclin on protein synthesis by a non-covalent modification of the ribosomes. This is Tetracycline resistance protein TetM from transposon Tn5251 (tetM(5251)) from Streptococcus pneumoniae.